Consider the following 330-residue polypeptide: 6-phosphogluconolactonase (330 aa).

The protein belongs to the cycloisomerase 2 family.

The catalysed reaction is 6-phospho-D-glucono-1,5-lactone + H2O = 6-phospho-D-gluconate + H(+). It participates in carbohydrate degradation; pentose phosphate pathway; D-ribulose 5-phosphate from D-glucose 6-phosphate (oxidative stage): step 2/3. Its function is as follows. Catalyzes the hydrolysis of 6-phosphogluconolactone to 6-phosphogluconate. This Erwinia tasmaniensis (strain DSM 17950 / CFBP 7177 / CIP 109463 / NCPPB 4357 / Et1/99) protein is 6-phosphogluconolactonase.